The following is an 83-amino-acid chain: Small ribosomal subunit protein uS17c (83 aa).

The protein belongs to the universal ribosomal protein uS17 family. As to quaternary structure, part of the 30S ribosomal subunit.

The protein localises to the plastid. Its subcellular location is the chloroplast. In terms of biological role, one of the primary rRNA binding proteins, it binds specifically to the 5'-end of 16S ribosomal RNA. This is Small ribosomal subunit protein uS17c (rps17) from Porphyra purpurea (Red seaweed).